The chain runs to 235 residues: Segregation and condensation protein A (235 aa).

The protein belongs to the ScpA family. As to quaternary structure, component of a cohesin-like complex composed of ScpA, ScpB and the Smc homodimer, in which ScpA and ScpB bind to the head domain of Smc. The presence of the three proteins is required for the association of the complex with DNA.

The protein localises to the cytoplasm. Functionally, participates in chromosomal partition during cell division. May act via the formation of a condensin-like complex containing Smc and ScpB that pull DNA away from mid-cell into both cell halves. The sequence is that of Segregation and condensation protein A from Streptococcus uberis (strain ATCC BAA-854 / 0140J).